The following is a 901-amino-acid chain: Probable inorganic carbon transporter subunit DabA (901 aa).

The Zn(2+) site is built by Cys424, Asp426, His606, and Cys621.

This sequence belongs to the inorganic carbon transporter (TC 9.A.2) DabA family. In terms of assembly, forms a complex with DabB. Requires Zn(2+) as cofactor.

It is found in the cell membrane. Part of an energy-coupled inorganic carbon pump. The chain is Probable inorganic carbon transporter subunit DabA from Staphylococcus aureus (strain USA300).